The chain runs to 461 residues: Isthmin-1 (461 aa).

Residues 1–26 (MVRLAAELLLLLGLLLLTLHITVLRS) form the signal peptide. A glycan (N-linked (GlcNAc...) asparagine) is linked at N33. The span at 40 to 58 (QDSRVAENNVNADSSSSVQ) shows a compositional bias: polar residues. 3 disordered regions span residues 40–62 (QDSR…LGPG), 73–92 (ASQP…RDGP), and 128–188 (EGSE…NFLK). The span at 131-141 (EPEKGMRKENK) shows a compositional bias: basic and acidic residues. Over residues 156–165 (SSSSSSSSVS) the composition is skewed to low complexity. One can recognise a TSP type-1 domain in the interval 215–259 (DGEGDWSAWSPCSVSCGNGNQKRTRSCGYACTATESRTCDMPSCP). Cystine bridges form between C226–C253, C230–C258, and C241–C245. N282 is a glycosylation site (N-linked (GlcNAc...) asparagine). The AMOP domain maps to 286 to 449 (LFGVDTDSCE…QKCAENPQDE (164 aa)).

Belongs to the isthmin family.

It is found in the secreted. In terms of biological role, may specifically influence certain angiogenesis process. The protein is Isthmin-1 (ism1) of Danio rerio (Zebrafish).